Here is a 241-residue protein sequence, read N- to C-terminus: Probable xyloglucan-specific endo-beta-1,4-glucanase A (241 aa).

An N-terminal signal peptide occupies residues 1–18 (MKFNLALALSLTVATAEA).

This sequence belongs to the glycosyl hydrolase 12 (cellulase H) family.

The protein localises to the secreted. It carries out the reaction xyloglucan + H2O = xyloglucan oligosaccharides.. Catalyzes endohydrolysis of 1,4-beta-D-glucosidic linkages in xyloglucan with retention of the beta-configuration of the glycosyl residues. Specific for xyloglucan and does not hydrolyze other cell wall components. This Aspergillus clavatus (strain ATCC 1007 / CBS 513.65 / DSM 816 / NCTC 3887 / NRRL 1 / QM 1276 / 107) protein is Probable xyloglucan-specific endo-beta-1,4-glucanase A (xgeA).